Here is a 372-residue protein sequence, read N- to C-terminus: 7-methylxanthosine synthase 1 (372 aa).

Y18 contacts S-adenosyl-L-homocysteine. 2 residues coordinate xanthosine: N21 and N25. S-adenosyl-L-homocysteine contacts are provided by C62, N67, D101, L102, S140, F141, and C157. Xanthosine is bound at residue Y158. C159 lines the S-adenosyl-L-homocysteine pocket. Positions 161 and 162 each coordinate xanthosine. The Mg(2+) site is built by N179, D261, F263, and N264. 3 residues coordinate xanthosine: S316, Y321, and Y356.

This sequence belongs to the methyltransferase superfamily. Type-7 methyltransferase family. The cofactor is Mg(2+). Expressed in stems, young leaves, floral buds, developing endosperm and immature fruits (grains). Detected in roots and old leaves, but not in mature fruits.

It carries out the reaction xanthosine + S-adenosyl-L-methionine = 7-methylxanthosine + S-adenosyl-L-homocysteine. The protein operates within alkaloid biosynthesis. In terms of biological role, involved in the biosynthesis of caffeine. Specific for xanthosine and could not use xanthosine 5'-monophosphate (XMP) as substrate. Catalyzes the 7-N-methylation activity of xanthosine, but does not have 1-N- or 3-N-methylation activity. The chain is 7-methylxanthosine synthase 1 from Coffea arabica (Arabian coffee).